Reading from the N-terminus, the 180-residue chain is Adenine phosphoribosyltransferase (180 aa).

This sequence belongs to the purine/pyrimidine phosphoribosyltransferase family. As to quaternary structure, homodimer.

It localises to the cytoplasm. The catalysed reaction is AMP + diphosphate = 5-phospho-alpha-D-ribose 1-diphosphate + adenine. It participates in purine metabolism; AMP biosynthesis via salvage pathway; AMP from adenine: step 1/1. Its function is as follows. Catalyzes a salvage reaction resulting in the formation of AMP, that is energically less costly than de novo synthesis. The polypeptide is Adenine phosphoribosyltransferase (Agrobacterium fabrum (strain C58 / ATCC 33970) (Agrobacterium tumefaciens (strain C58))).